A 1357-amino-acid chain; its full sequence is DNA-directed RNA polymerase subunit beta (1357 aa).

This sequence belongs to the RNA polymerase beta chain family. The RNAP catalytic core consists of 2 alpha, 1 beta, 1 beta' and 1 omega subunit. When a sigma factor is associated with the core the holoenzyme is formed, which can initiate transcription.

The catalysed reaction is RNA(n) + a ribonucleoside 5'-triphosphate = RNA(n+1) + diphosphate. Its function is as follows. DNA-dependent RNA polymerase catalyzes the transcription of DNA into RNA using the four ribonucleoside triphosphates as substrates. This is DNA-directed RNA polymerase subunit beta from Pseudomonas savastanoi pv. phaseolicola (strain 1448A / Race 6) (Pseudomonas syringae pv. phaseolicola (strain 1448A / Race 6)).